The following is a 118-amino-acid chain: Small ribosomal subunit protein uS13 (118 aa).

The segment at 91–118 is disordered; sequence HRRGLPVRGQRTKTNARTRKGPRKPIKK.

It belongs to the universal ribosomal protein uS13 family. In terms of assembly, part of the 30S ribosomal subunit. Forms a loose heterodimer with protein S19. Forms two bridges to the 50S subunit in the 70S ribosome.

Its function is as follows. Located at the top of the head of the 30S subunit, it contacts several helices of the 16S rRNA. In the 70S ribosome it contacts the 23S rRNA (bridge B1a) and protein L5 of the 50S subunit (bridge B1b), connecting the 2 subunits; these bridges are implicated in subunit movement. Contacts the tRNAs in the A and P-sites. This Serratia proteamaculans (strain 568) protein is Small ribosomal subunit protein uS13.